Reading from the N-terminus, the 107-residue chain is Integration host factor subunit beta (107 aa).

The disordered stretch occupies residues 87–107 (RERVNNGTRKNGGSADAASGG).

It belongs to the bacterial histone-like protein family. Heterodimer of an alpha and a beta chain.

Functionally, this protein is one of the two subunits of integration host factor, a specific DNA-binding protein that functions in genetic recombination as well as in transcriptional and translational control. This is Integration host factor subunit beta from Granulibacter bethesdensis (strain ATCC BAA-1260 / CGDNIH1).